The primary structure comprises 341 residues: Peroxisomal membrane protein import receptor PEX19 (341 aa).

Acidic residues predominate over residues 1-18; sequence MNENEYDNFDDLDDLLDE. Disordered regions lie at residues 1-26, 39-66, 109-141, 293-312, and 318-341; these read MNEN…LDEQ, DSEN…EDPE, VPRQ…FKNI, LGDS…NEEE, and LEID…CKQQ. The span at 39-53 shows a compositional bias: basic and acidic residues; the sequence is DSENKEKNAESKDSD. Ser-61 is subject to Phosphoserine. The span at 113 to 141 shows a compositional bias: polar residues; that stretch reads QMEQGSSSLKSNSTDKGTLNGSNPGFKNI. Ser-303 carries the post-translational modification Phosphoserine. The segment covering 330 to 341 has biased composition (basic and acidic residues); the sequence is LDKELTDGCKQQ. A Cysteine methyl ester modification is found at Cys-338. The S-farnesyl cysteine moiety is linked to residue Cys-338. A propeptide spans 339-341 (removed in mature form); that stretch reads KQQ.

Belongs to the peroxin-19 family. Interacts (farnesylated) with PEX3; farnesylation is required for this interaction. Interacts with PEX2, PEX5, PEX10, PEX11, PEX12, PEX13, PEX14, PEX17, PEX22, PEX25, PEX30 and PEX32; the interaction requires well-defined PEX19-binding sites within the peroxisomal membrane protein targeting signal (mPTS) of the PMPs and is independent on the presence of PEX3. Interacts with VPS1.

The protein localises to the cytoplasm. It localises to the peroxisome membrane. It is found in the endoplasmic reticulum membrane. In terms of biological role, required for proper post-translational import and stabilization of peroxisomal membrane proteins (PMPs). Acts as a cytosolic import receptor for PMPs and delivers them to the docking factor PEX3 at the peroxisomal membrane for subsequent insertion into the membrane. Acts as a chaperone in stabilizing or maintaining PMPs in the lipid bilayer. Directs PEX17, a peripheral component of the peroxisomal matrix protein translocation machinery, to peroxisomes. Stabilizes VPS1, a protein required for peroxisomal fission, at the peroxisomal membrane. Also acts in conjunction with PEX3 in the formation of peroxisomes from preperoxisomal compartments at the endoplasmic reticulum during de novo peroxisome synthesis, probably via the import of additional PMPs. This is Peroxisomal membrane protein import receptor PEX19 (PEX19) from Saccharomyces cerevisiae (strain YJM789) (Baker's yeast).